The primary structure comprises 647 residues: Leucine aminopeptidase 2 (647 aa).

Residues 169–171 (QCQ) and 295–300 (PYGGME) each bind substrate. H324 contributes to the Zn(2+) binding site. E325 functions as the Proton acceptor in the catalytic mechanism. The Zn(2+) site is built by H328 and E347. Catalysis depends on Y418, which acts as the Proton donor.

Belongs to the peptidase M1 family. The cofactor is Zn(2+).

The protein localises to the cytoplasm. It is found in the nucleus. The enzyme catalyses an epoxide + H2O = an ethanediol. Aminopeptidase that preferentially cleaves di- and tripeptides. Also has low epoxide hydrolase activity (in vitro). Can hydrolyze the epoxide leukotriene LTA(4) but it forms preferentially 5,6-dihydroxy-7,9,11,14-eicosatetraenoic acid rather than the cytokine leukotriene B(4) as the product compared to the homologous mammalian enzyme (in vitro). This Yarrowia lipolytica (strain CLIB 122 / E 150) (Yeast) protein is Leucine aminopeptidase 2.